The chain runs to 318 residues: Biotin synthase (318 aa).

The region spanning 40-260 (DDIQKASLLS…VATARIIMPL (221 aa)) is the Radical SAM core domain. [4Fe-4S] cluster-binding residues include cysteine 55, cysteine 59, and cysteine 62. The [2Fe-2S] cluster site is built by cysteine 100, cysteine 132, cysteine 192, and arginine 264.

Belongs to the radical SAM superfamily. Biotin synthase family. In terms of assembly, homodimer. The cofactor is [4Fe-4S] cluster. It depends on [2Fe-2S] cluster as a cofactor.

It catalyses the reaction (4R,5S)-dethiobiotin + (sulfur carrier)-SH + 2 reduced [2Fe-2S]-[ferredoxin] + 2 S-adenosyl-L-methionine = (sulfur carrier)-H + biotin + 2 5'-deoxyadenosine + 2 L-methionine + 2 oxidized [2Fe-2S]-[ferredoxin]. It functions in the pathway cofactor biosynthesis; biotin biosynthesis; biotin from 7,8-diaminononanoate: step 2/2. Its function is as follows. Catalyzes the conversion of dethiobiotin (DTB) to biotin by the insertion of a sulfur atom into dethiobiotin via a radical-based mechanism. The protein is Biotin synthase of Ruegeria pomeroyi (strain ATCC 700808 / DSM 15171 / DSS-3) (Silicibacter pomeroyi).